The chain runs to 483 residues: Glutamyl-tRNA(Gln) amidotransferase subunit A (483 aa).

Active-site charge relay system residues include Lys76 and Ser151. Ser175 (acyl-ester intermediate) is an active-site residue.

Belongs to the amidase family. GatA subfamily. As to quaternary structure, heterotrimer of A, B and C subunits.

It catalyses the reaction L-glutamyl-tRNA(Gln) + L-glutamine + ATP + H2O = L-glutaminyl-tRNA(Gln) + L-glutamate + ADP + phosphate + H(+). In terms of biological role, allows the formation of correctly charged Gln-tRNA(Gln) through the transamidation of misacylated Glu-tRNA(Gln) in organisms which lack glutaminyl-tRNA synthetase. The reaction takes place in the presence of glutamine and ATP through an activated gamma-phospho-Glu-tRNA(Gln). The polypeptide is Glutamyl-tRNA(Gln) amidotransferase subunit A (Coxiella burnetii (strain CbuK_Q154) (Coxiella burnetii (strain Q154))).